A 1265-amino-acid polypeptide reads, in one-letter code: Protein diaphanous homolog 1 (1265 aa).

Methionine 1 is subject to N-acetylmethionine. The span at 1 to 12 (MEPSGGGLGPGR) shows a compositional bias: gly residues. Disordered regions lie at residues 1-42 (MEPS…FTLK) and 54-83 (SMRI…TAQS). Serine 22 bears the Phosphoserine mark. Residues 54 to 65 (SMRIKKEKEKPN) are compositionally biased toward basic and acidic residues. Residues 67 to 83 (AHRNSSASYGDDPTAQS) show a composition bias toward polar residues. The region spanning 84-449 (LQDISDDQVL…QIVLHKNGTD (366 aa)) is the GBD/FH3 domain. Residues 474-568 (VEKSEAKATE…KKEMASLSAV (95 aa)) are a coiled coil. The disordered stretch occupies residues 573 to 742 (SVSSSAAVPQ…PPPPGMGVPP (170 aa)). Composition is skewed to pro residues over residues 594 to 628 (IPPP…PPLP) and 645 to 742 (IPPP…GVPP). An FH1 domain is found at 625 to 757 (PPLPGGACIS…FGIPAAPVLP (133 aa)). The residue at position 761 (threonine 761) is a Phosphothreonine. Residues 762–1164 (PKKVYKPEVQ…MRRAKLAKEK (403 aa)) form the FH2 domain. An N6-acetyllysine mark is found at lysine 1050 and lysine 1096. Tyrosine 1114 is subject to Phosphotyrosine. A coiled-coil region spans residues 1141–1185 (AVKENQKRRETEEKMRRAKLAKEKAEKERLEKQQKREQLIDMNAE). Positions 1187-1215 (DETGVMDSLLEALQSGAAFRRKRGPRQVN) constitute a DAD domain. At serine 1247 the chain carries Phosphoserine.

This sequence belongs to the formin homology family. Diaphanous subfamily. In terms of assembly, homodimer. Interacts with the GTP-bound form of RHOA. Interacts with RHOC, PFY1, MAPRE1, BAIAP2 and APC. Interacts with SCAI. Interacts with DCAF7, via FH2 domain. Interacts with NCDN. Interacts with OSBPL10, OSBPL2, VIM, TUBB and DYN1. Post-translationally, phosphorylation at Thr-761 is stimulated by cAMP and regulates stability, complex formation and mitochondrial movement. In terms of tissue distribution, expressed in testis. Present in Sertoli cells (at protein level).

The protein localises to the cell membrane. Its subcellular location is the cell projection. It localises to the ruffle membrane. The protein resides in the cytoplasm. It is found in the cytoskeleton. The protein localises to the microtubule organizing center. Its subcellular location is the centrosome. It localises to the spindle. The protein resides in the nucleus. Actin nucleation and elongation factor required for the assembly of F-actin structures, such as actin cables and stress fibers. Binds to the barbed end of the actin filament and slows down actin polymerization and depolymerization. Required for cytokinesis, and transcriptional activation of the serum response factor. DFR proteins couple Rho and Src tyrosine kinase during signaling and the regulation of actin dynamics. Functions as a scaffold protein for MAPRE1 and APC to stabilize microtubules and promote cell migration. Has neurite outgrowth promoting activity. Acts in a Rho-dependent manner to recruit PFY1 to the membrane. The MEMO1-RHOA-DIAPH1 signaling pathway plays an important role in ERBB2-dependent stabilization of microtubules at the cell cortex. It controls the localization of APC and CLASP2 to the cell membrane, via the regulation of GSK3B activity. In turn, membrane-bound APC allows the localization of the MACF1 to the cell membrane, which is required for microtubule capture and stabilization. Plays a role in the regulation of cell morphology and cytoskeletal organization. Required in the control of cell shape. Also acts as an actin nucleation and elongation factor in the nucleus by promoting nuclear actin polymerization inside the nucleus to drive serum-dependent SRF-MRTFA activity. This chain is Protein diaphanous homolog 1, found in Rattus norvegicus (Rat).